We begin with the raw amino-acid sequence, 1250 residues long: DNA excision repair protein ERCC-6-like (1250 aa).

Ser-14 bears the Phosphoserine mark. Residues 21 to 54 (YLRYVKEAKEATKNGDLEEAFKLFNLAKDIFPNE) form a TPR 1 repeat. Positions 109–277 (SLYRDGRKGG…WSLFDFACQG (169 aa)) constitute a Helicase ATP-binding domain. 122 to 129 (DDMGLGKT) serves as a coordination point for ATP. The DEAH box motif lies at 228–231 (DEAH). The Helicase C-terminal domain occupies 464–620 (FLMDLLKRLR…EKKNPFRYFS (157 aa)). The tract at residues 735–768 (VFPSSTKKKCPKLNKPQPQPSPLLSTHHTQEEDI) is disordered. Ser-755, Ser-774, Ser-807, and Ser-810 each carry phosphoserine. Thr-813 is modified (phosphothreonine). The residue at position 820 (Ser-820) is a Phosphoserine. The tract at residues 926–946 (SALQDAQASEAKLEEEPSASS) is disordered. Residues Ser-969, Ser-971, Ser-995, Ser-1004, and Ser-1028 each carry the phosphoserine modification. The interval 1061–1092 (ASTPKNDISPPGRFFSSQIPSSVNKSMNSRRS) is disordered. The residue at position 1063 (Thr-1063) is a Phosphothreonine; by PLK1. Residue Ser-1069 is modified to Phosphoserine. A compositionally biased stretch (polar residues) spans 1075 to 1087 (FSSQIPSSVNKSM). Phosphoserine occurs at positions 1098 and 1118. The interval 1110–1199 (MEERLDDSSE…QDKAAEATND (90 aa)) is disordered. Basic and acidic residues predominate over residues 1115-1124 (DDSSEAKGPE). Positions 1125–1135 (DYPEEGVEESS) are enriched in acidic residues. A compositionally biased stretch (polar residues) spans 1149 to 1173 (ETLSSENKSSWLMTSKPSALAQETS). A phosphoserine mark is found at Ser-1181 and Ser-1188. Residues 1200–1233 (YETLVKRGKELKECGKIQEALNCLVKALDIKSAD) form a TPR 2 repeat.

This sequence belongs to the SNF2/RAD54 helicase family. In terms of assembly, interacts with PLK1, which phosphorylates it. Both proteins are mutually dependent on each other for correct subcellular localization. Interacts (via N-terminal TPR repeat) with BEND3 (via BEN domains 1 and 3); the interaction is direct. Phosphorylation by PLK1 prevents the association with chromosome arms and restricts its localization to the kinetochore-centromere region.

It localises to the chromosome. The protein localises to the centromere. It is found in the kinetochore. It carries out the reaction ATP + H2O = ADP + phosphate + H(+). DNA helicase that acts as a tension sensor that associates with catenated DNA which is stretched under tension until it is resolved during anaphase. Functions as ATP-dependent DNA translocase. Can promote Holliday junction branch migration (in vitro). This is DNA excision repair protein ERCC-6-like (ERCC6L) from Homo sapiens (Human).